The chain runs to 495 residues: Regulator of G-protein signaling 7 (495 aa).

Residues 37–112 (EKNGIPIRTV…DDGTFYRFQT (76 aa)) enclose the DEP domain. A phosphoserine mark is found at Ser229 and Ser241. The tract at residues 235–256 (NDIRSHSPTHTPTPETKPPTED) is disordered. Thr243 is subject to Phosphothreonine. The G protein gamma domain maps to 255 to 316 (EDELQQQIKY…LSDDTTFWEL (62 aa)). Positions 333–448 (GMDEALKDPV…IRSSAYQELL (116 aa)) constitute an RGS domain. Ser434 is modified (phosphoserine).

As to quaternary structure, interacts with GNB5, forming the RGS7-GNB5 complex. Interacts with GPR158; promotes the GTPase activator activity of the RGS7-GNB5 complex in absence of glycine, in contrast GTPase activator activity of the RGS7-GNB5 complex is inhibited in presence of glycine. Interacts with GPR179. Interacts with PKD1; this prevents rapid proteasomal degradation. Interacts with RGS7BP, leading to regulate the subcellular location of the heterodimer formed with GNB5. Interacts (phosphorylated form) with 14-3-3 protein YWHAQ. Interacts with SNAPIN. Interacts with GNAI1. Interacts with GNAO1, GNAI3 and GNAZ. Post-translationally, palmitoylated. In terms of processing, ubiquitinated, leading to rapid proteasomal degradation. Phosphorylation and subsequent interaction with 14-3-3 proteins inhibits GAP activity.

Its subcellular location is the cytoplasm. It is found in the cytosol. It localises to the cell membrane. The protein localises to the membrane. GTPase activator component of the RGS7-GNB5 complex that regulates G protein-coupled receptor signaling cascades. The RGS7-GNB5 complex acts as an inhibitor signal transduction by promoting the GTPase activity of G protein alpha subunits, such as GNAO1, thereby driving them into their inactive GDP-bound form. May play a role in synaptic vesicle exocytosis. Glycine-dependent regulation of the RGS7-GNB5 complex by GPR158 affects mood and cognition via its ability to regulate neuronal excitability in L2/L3 pyramidal neurons of the prefrontal cortex. Modulates the activity of potassium channels that are activated by GNAO1 in response to muscarinic acetylcholine receptor M2/CHRM2 signaling. The sequence is that of Regulator of G-protein signaling 7 (RGS7) from Homo sapiens (Human).